We begin with the raw amino-acid sequence, 382 residues long: Anhydro-N-acetylmuramic acid kinase (382 aa).

ATP is bound at residue 22-29; it reads GTSMDGVD.

This sequence belongs to the anhydro-N-acetylmuramic acid kinase family.

The enzyme catalyses 1,6-anhydro-N-acetyl-beta-muramate + ATP + H2O = N-acetyl-D-muramate 6-phosphate + ADP + H(+). The protein operates within amino-sugar metabolism; 1,6-anhydro-N-acetylmuramate degradation. It participates in cell wall biogenesis; peptidoglycan recycling. Functionally, catalyzes the specific phosphorylation of 1,6-anhydro-N-acetylmuramic acid (anhMurNAc) with the simultaneous cleavage of the 1,6-anhydro ring, generating MurNAc-6-P. Is required for the utilization of anhMurNAc either imported from the medium or derived from its own cell wall murein, and thus plays a role in cell wall recycling. In Burkholderia orbicola (strain AU 1054), this protein is Anhydro-N-acetylmuramic acid kinase.